The following is a 240-amino-acid chain: Transcriptional regulatory protein rxt2 (240 aa).

Belongs to the RXT2 family. In terms of assembly, component of the RPD3C(L) complex.

The protein resides in the nucleus. Functionally, component of the RPD3C(L) histone deacetylase complex (HDAC) responsible for the deacetylation of lysine residues on the N-terminal part of the core histones (H2A, H2B, H3 and H4). Histone deacetylation gives a tag for epigenetic repression and plays an important role in transcriptional regulation, cell cycle progression and developmental events. This Schizosaccharomyces pombe (strain 972 / ATCC 24843) (Fission yeast) protein is Transcriptional regulatory protein rxt2 (rtx2).